The primary structure comprises 301 residues: Protein translocase subunit SecF (301 aa).

Transmembrane regions (helical) follow at residues 17–37 (YIAL…IFQI), 137–157 (DALF…AIRF), 163–183 (IGAT…FYIL), 190–210 (IFIS…VVVF), 239–261 (LSRT…FFGG), and 272–292 (ILGI…VVLL).

This sequence belongs to the SecD/SecF family. SecF subfamily. In terms of assembly, forms a complex with SecD. Part of the essential Sec protein translocation apparatus which comprises SecA, SecYEG and auxiliary proteins SecDF. Other proteins may also be involved.

It is found in the cell inner membrane. Its function is as follows. Part of the Sec protein translocase complex. Interacts with the SecYEG preprotein conducting channel. SecDF uses the proton motive force (PMF) to complete protein translocation after the ATP-dependent function of SecA. The chain is Protein translocase subunit SecF from Thermodesulfovibrio yellowstonii (strain ATCC 51303 / DSM 11347 / YP87).